We begin with the raw amino-acid sequence, 400 residues long: Argininosuccinate synthase (400 aa).

ATP-binding positions include 11-19 (AYSGGLDTS) and Ala-38. Residues Tyr-89 and Ser-94 each contribute to the L-citrulline site. Residue Gly-119 participates in ATP binding. Residues Thr-121, Asn-125, and Asp-126 each coordinate L-aspartate. Asn-125 contacts L-citrulline. Residues Arg-129, Ser-179, Ser-188, Glu-264, and Tyr-276 each coordinate L-citrulline.

It belongs to the argininosuccinate synthase family. Type 1 subfamily. As to quaternary structure, homotetramer.

The protein resides in the cytoplasm. The catalysed reaction is L-citrulline + L-aspartate + ATP = 2-(N(omega)-L-arginino)succinate + AMP + diphosphate + H(+). It participates in amino-acid biosynthesis; L-arginine biosynthesis; L-arginine from L-ornithine and carbamoyl phosphate: step 2/3. The sequence is that of Argininosuccinate synthase from Oleidesulfovibrio alaskensis (strain ATCC BAA-1058 / DSM 17464 / G20) (Desulfovibrio alaskensis).